The sequence spans 222 residues: Vacuolar protein sorting-associated protein 2 homolog 2 (222 aa).

Coiled coils occupy residues 26 to 83 (RGIE…AQIR) and 143 to 222 (SEAI…LRRI). Residues 179-222 (SSAPKGRIATKTAAPPASTAATNKNSESSEVDELEKRLASLRRI) are disordered. Positions 187–203 (ATKTAAPPASTAATNKN) are enriched in low complexity.

It belongs to the SNF7 family. As to quaternary structure, component of the endosomal sorting required for transport complex III (ESCRT-III), composed at least of VPS2, VPS20, VPS24 and VPS32. Interacts with CHMP1A, CHMP1B and VPS60-1.

The protein resides in the endosome. Its function is as follows. Component of the ESCRT-III complex, which is required for multivesicular bodies (MVBs) formation and sorting of endosomal cargo proteins into MVBs. The ESCRT-III complex is probably involved in the concentration of MVB cargo. This chain is Vacuolar protein sorting-associated protein 2 homolog 2 (VPS2.2), found in Arabidopsis thaliana (Mouse-ear cress).